A 357-amino-acid polypeptide reads, in one-letter code: Probable cinnamyl alcohol dehydrogenase 1 (357 aa).

Cys-47 is a Zn(2+) binding site. Thr-49 contacts NADP(+). His-69, Glu-70, Cys-100, Cys-103, Cys-106, Cys-114, and Cys-163 together coordinate Zn(2+). Residues Thr-167, 188–193 (GLGGVG), 211–216 (SSSNKK), Thr-251, Gly-275, and 298–300 (SFI) contribute to the NADP(+) site.

Belongs to the zinc-containing alcohol dehydrogenase family. Homodimer. The cofactor is Zn(2+). In terms of processing, the N-terminus is blocked.

The enzyme catalyses (E)-cinnamyl alcohol + NADP(+) = (E)-cinnamaldehyde + NADPH + H(+). The catalysed reaction is (E)-coniferol + NADP(+) = (E)-coniferaldehyde + NADPH + H(+). It carries out the reaction (E)-sinapyl alcohol + NADP(+) = (E)-sinapaldehyde + NADPH + H(+). It catalyses the reaction (E)-4-coumaroyl alcohol + NADP(+) = (E)-4-coumaraldehyde + NADPH + H(+). The enzyme catalyses (E)-caffeyl alcohol + NADP(+) = (E)-caffeyl aldehyde + NADPH + H(+). It functions in the pathway aromatic compound metabolism; phenylpropanoid biosynthesis. Its function is as follows. Involved in lignin biosynthesis. Catalyzes the final step specific for the production of lignin monomers. Catalyzes the NADPH-dependent reduction of coniferaldehyde, 5-hydroxyconiferaldehyde, sinapaldehyde, 4-coumaraldehyde and caffeyl aldehyde to their respective alcohols. In Nicotiana tabacum (Common tobacco), this protein is Probable cinnamyl alcohol dehydrogenase 1.